The chain runs to 105 residues: UPF0145 protein LPC_0273 (105 aa).

Belongs to the UPF0145 family.

The polypeptide is UPF0145 protein LPC_0273 (Legionella pneumophila (strain Corby)).